The following is a 166-amino-acid chain: Crossover junction endodeoxyribonuclease RuvC (166 aa).

Catalysis depends on residues D7, E68, and D141. Positions 7, 68, and 141 each coordinate Mg(2+).

Belongs to the RuvC family. In terms of assembly, homodimer which binds Holliday junction (HJ) DNA. The HJ becomes 2-fold symmetrical on binding to RuvC with unstacked arms; it has a different conformation from HJ DNA in complex with RuvA. In the full resolvosome a probable DNA-RuvA(4)-RuvB(12)-RuvC(2) complex forms which resolves the HJ. Mg(2+) serves as cofactor.

The protein localises to the cytoplasm. The enzyme catalyses Endonucleolytic cleavage at a junction such as a reciprocal single-stranded crossover between two homologous DNA duplexes (Holliday junction).. In terms of biological role, the RuvA-RuvB-RuvC complex processes Holliday junction (HJ) DNA during genetic recombination and DNA repair. Endonuclease that resolves HJ intermediates. Cleaves cruciform DNA by making single-stranded nicks across the HJ at symmetrical positions within the homologous arms, yielding a 5'-phosphate and a 3'-hydroxyl group; requires a central core of homology in the junction. The consensus cleavage sequence is 5'-(A/T)TT(C/G)-3'. Cleavage occurs on the 3'-side of the TT dinucleotide at the point of strand exchange. HJ branch migration catalyzed by RuvA-RuvB allows RuvC to scan DNA until it finds its consensus sequence, where it cleaves and resolves the cruciform DNA. The chain is Crossover junction endodeoxyribonuclease RuvC from Koribacter versatilis (strain Ellin345).